The chain runs to 953 residues: MDQTKPPRRNPLAFTPWPVTLITAVVYLAFVIPLLVIHHVVPSAPTSSPDGLNITEAWNDLQVLTAGYRPYNSRQNDKIHDWLLHRINEILGAAPPATTDEKKPDVFVFDDTRSNLTFARDNLAVYFEGTNILVYIRGEDDDQEQWWELPEGSPKGKGGVLVNAHYDSVSTGYGATDDGVGVVTCLQLVKYFTTPKNAPRKGLVVLFNNGEEDFLNGARVYSQHPLSRFPHTFLNLEGAGAGGRAVLFRSSDAEVAASYMRSKHPFGSVLGSDGFKAGLIRSQTDYVVFEGDMGLRGLDVAFLEPRARYHTDQDDTRHTSKDSLWHMLSTAVATTEDLVSDTSDRFDGPARNDHKIASGTGHQAVWFDLYGSTFVLFRLHTLFALSVTLLVVAPIVLLLTSIILTKVDKMYLFRTSIRPEGSLEVLPLYGDRGVIRYPFLLGIPTAVTIGLAYLLTKFNPYIVHSSQYAVWSMMVSVWIFLAWFVSRVADFARPSAFHRVYTLTWTFVVMWVLQVIATVYQDRWALGGSYFIFFAYAGTFLATWISYLELFALPRKSEYANHLRPVSRHASSHSSRRGLSEEDEEDEDEAPTESTSLLGSRQRTTFANYVRVNADTADLSDSEEHTQDVNVYGLEQRWSASLPKWLWLLQFLLAAPIVLILVGPIALLLTGSLHQTGQDGSSSLFIYIAIVALTTLLLSPMLPFVHRCTYHIPLFMLAVFAGTLIYNLVAFPFSDSNRLKLFFIQEVDLDTGLNTASLTGVQPFVHDVAVGLPSAAGQNVTCGPFGDRFKCSWTGIPPHVLTEDKPVEEWLSFEVSRSIDKPRHAQLQISGQNTRACKVVFDSPIKNFHVAGSAYDPRFPHTYAKGIKEIRLWSRVWDNTWTVDVEWFNPDSSSDHSKTSGSLTGQVVCLWSDYNQPGTIPALDEVRQYGPAWIGVSKLADGLVEGRKSFEIA.

The Cytoplasmic segment spans residues 1–16; sequence MDQTKPPRRNPLAFTP. A helical membrane pass occupies residues 17-37; that stretch reads WPVTLITAVVYLAFVIPLLVI. Over 38 to 382 the chain is Vacuolar; the sequence is HHVVPSAPTS…TFVLFRLHTL (345 aa). 2 N-linked (GlcNAc...) asparagine glycosylation sites follow: Asn-53 and Asn-115. Zn(2+)-binding residues include His-165 and Asp-177. Glu-211 (proton acceptor) is an active-site residue. 3 residues coordinate Zn(2+): Glu-212, Glu-237, and His-310. The chain crosses the membrane as a helical span at residues 383–403; sequence FALSVTLLVVAPIVLLLTSII. Topologically, residues 404 to 437 are cytoplasmic; the sequence is LTKVDKMYLFRTSIRPEGSLEVLPLYGDRGVIRY. Residues 438 to 458 form a helical membrane-spanning segment; that stretch reads PFLLGIPTAVTIGLAYLLTKF. The Vacuolar segment spans residues 459–464; the sequence is NPYIVH. The helical transmembrane segment at 465-485 threads the bilayer; it reads SSQYAVWSMMVSVWIFLAWFV. The Cytoplasmic portion of the chain corresponds to 486-499; that stretch reads SRVADFARPSAFHR. A helical membrane pass occupies residues 500 to 520; that stretch reads VYTLTWTFVVMWVLQVIATVY. Residues 521-524 lie on the Vacuolar side of the membrane; it reads QDRW. The helical transmembrane segment at 525–545 threads the bilayer; that stretch reads ALGGSYFIFFAYAGTFLATWI. Residues 546–650 are Cytoplasmic-facing; it reads SYLELFALPR…SLPKWLWLLQ (105 aa). Positions 570 to 599 are disordered; sequence ASSHSSRRGLSEEDEEDEDEAPTESTSLLG. Positions 581-591 are enriched in acidic residues; sequence EEDEEDEDEAP. A helical transmembrane segment spans residues 651 to 671; the sequence is FLLAAPIVLILVGPIALLLTG. Residues 672-684 are Vacuolar-facing; that stretch reads SLHQTGQDGSSSL. The helical transmembrane segment at 685-705 threads the bilayer; that stretch reads FIYIAIVALTTLLLSPMLPFV. Residues 706-711 lie on the Cytoplasmic side of the membrane; sequence HRCTYH. A helical membrane pass occupies residues 712 to 732; that stretch reads IPLFMLAVFAGTLIYNLVAFP. Residues 733–953 are Vacuolar-facing; sequence FSDSNRLKLF…VEGRKSFEIA (221 aa). An N-linked (GlcNAc...) asparagine glycan is attached at Asn-779.

Belongs to the peptidase M28 family. It depends on Zn(2+) as a cofactor.

It localises to the vacuole membrane. In terms of biological role, may be involved in vacuolar sorting and osmoregulation. The chain is Vacuolar membrane protease from Emericella nidulans (strain FGSC A4 / ATCC 38163 / CBS 112.46 / NRRL 194 / M139) (Aspergillus nidulans).